The sequence spans 970 residues: Type III restriction-modification enzyme EcoP15I Res subunit (970 aa).

The interval 75–540 (AKSNIIDVSM…EVGRGLRLPV (466 aa)) is helicase-like domain. AMP is bound by residues threonine 91, glycine 122, phenylalanine 126, and aspartate 226. Positions 894–918 (TYSPDFAYVVKTAEGDYLNFIIETK) are endonuclease domain.

Belongs to the type III restriction-modification system Res protein family. In terms of assembly, a heterotetramer with stoichiometry Res(2)Mod(2). A heterotrimer with stoichiometry Res(1)Mod(2). Mg(2+) is required as a cofactor. Requires S-adenosyl-L-methionine as cofactor.

It catalyses the reaction Endonucleolytic cleavage of DNA to give specific double-stranded fragments with terminal 5'-phosphates.. In terms of biological role, a type III restriction enzyme that recognizes 2 inversely oriented double-stranded sequences 5'-CAGCAG-3' and cleaves DNA 25-27 base pairs downstream of one site. DNA restriction requires both the Res and Mod subunits. DNA topology affects its action; relaxed and negatively supercoiled DNA are digested but positively supercoiled DNA is not a good substrate. Interacts with DNA approximately one half-turn downstream of the recognition site. After binding to one recognition site undergoes random one-dimensional diffusion along DNA until it collides with a stationary enzyme bound to the second DNA site, which is when DNA cleavage occurs. The chain is Type III restriction-modification enzyme EcoP15I Res subunit from Escherichia coli.